Consider the following 238-residue polypeptide: Aspartate/glutamate leucyltransferase (238 aa).

This sequence belongs to the R-transferase family. Bpt subfamily.

The protein localises to the cytoplasm. It catalyses the reaction N-terminal L-glutamyl-[protein] + L-leucyl-tRNA(Leu) = N-terminal L-leucyl-L-glutamyl-[protein] + tRNA(Leu) + H(+). The catalysed reaction is N-terminal L-aspartyl-[protein] + L-leucyl-tRNA(Leu) = N-terminal L-leucyl-L-aspartyl-[protein] + tRNA(Leu) + H(+). Functions in the N-end rule pathway of protein degradation where it conjugates Leu from its aminoacyl-tRNA to the N-termini of proteins containing an N-terminal aspartate or glutamate. This is Aspartate/glutamate leucyltransferase from Aeromonas salmonicida (strain A449).